The chain runs to 85 residues: Cytochrome b (85 aa).

The next 3 helical transmembrane spans lie at 1 to 8 (LTGLFLAM), 32 to 53 (WLIR…YLHI), and 68 to 85 (WNVG…AFVG). Histidine 38 and histidine 52 together coordinate heme b.

Belongs to the cytochrome b family. As to quaternary structure, the cytochrome bc1 complex contains 3 respiratory subunits (MT-CYB, CYC1 and UQCRFS1), 2 core proteins (UQCRC1 and UQCRC2) and probably 6 low-molecular weight proteins. It depends on heme b as a cofactor.

The protein localises to the mitochondrion inner membrane. In terms of biological role, component of the ubiquinol-cytochrome c reductase complex (complex III or cytochrome b-c1 complex) that is part of the mitochondrial respiratory chain. The b-c1 complex mediates electron transfer from ubiquinol to cytochrome c. Contributes to the generation of a proton gradient across the mitochondrial membrane that is then used for ATP synthesis. In Pomoxis nigromaculatus (Black crappie), this protein is Cytochrome b (mt-cyb).